The following is a 362-amino-acid chain: MAQVFNFSSGPAMLPADVLKQAQQELCDWNGLGTSVMEISHRGKEFIKVAEEAEHDFRELLNVPSNYKVLFCHGGGRGQFAAVPLNILGDKTTADYVDAGYWAASAIKEAKKYCTPNVFDAKVTVDGLRAVKPMREWQLSDNAAYLHYCPNETIDGIAIDETPDFGNEVVVAADFSSTILSRPIDVSRYGVIYAGAQKNIGPAGLTIVIVREDLLGKANIACPSILDYSILNDNDSMFNTPPTFAWYLSGLVFKWLKANGGVAAMDKINQQKAELLYGAIDNSDFYRNDVAKANRSRMNVPFQLADNALDKLFLEESFAAGLHALKGHRVVGGMRASIYNAMPLEGVIALTDFMADFERRHG.

L-glutamate contacts are provided by Ser9 and Arg42. Residues 76-77 (GR), Trp102, Thr153, Asp174, and Gln197 each bind pyridoxal 5'-phosphate. Lys198 bears the N6-(pyridoxal phosphate)lysine mark. Residue 239 to 240 (NT) participates in pyridoxal 5'-phosphate binding.

Belongs to the class-V pyridoxal-phosphate-dependent aminotransferase family. SerC subfamily. Homodimer. Pyridoxal 5'-phosphate serves as cofactor.

The protein localises to the cytoplasm. It carries out the reaction O-phospho-L-serine + 2-oxoglutarate = 3-phosphooxypyruvate + L-glutamate. The enzyme catalyses 4-(phosphooxy)-L-threonine + 2-oxoglutarate = (R)-3-hydroxy-2-oxo-4-phosphooxybutanoate + L-glutamate. It functions in the pathway amino-acid biosynthesis; L-serine biosynthesis; L-serine from 3-phospho-D-glycerate: step 2/3. The protein operates within cofactor biosynthesis; pyridoxine 5'-phosphate biosynthesis; pyridoxine 5'-phosphate from D-erythrose 4-phosphate: step 3/5. Functionally, catalyzes the reversible conversion of 3-phosphohydroxypyruvate to phosphoserine and of 3-hydroxy-2-oxo-4-phosphonooxybutanoate to phosphohydroxythreonine. This Escherichia fergusonii (strain ATCC 35469 / DSM 13698 / CCUG 18766 / IAM 14443 / JCM 21226 / LMG 7866 / NBRC 102419 / NCTC 12128 / CDC 0568-73) protein is Phosphoserine aminotransferase.